Here is a 343-residue protein sequence, read N- to C-terminus: Phosphoglycerate mutase-like protein 2 (343 aa).

Residues 1 to 35 constitute a chloroplast transit peptide; it reads MIHQSMTSNLSFYISSVSHLSSPLPSLSRLSLRCC. The Tele-phosphohistidine intermediate role is filled by His-65. Glu-177 (proton donor/acceptor) is an active-site residue. Residues 322–343 form a disordered region; that stretch reads MTNYPGTILTGEDASSDIADQK.

It belongs to the phosphoglycerate mutase family.

The protein resides in the plastid. The protein localises to the chloroplast. May play a role in carbohydrates metabolism. The chain is Phosphoglycerate mutase-like protein 2 from Arabidopsis thaliana (Mouse-ear cress).